A 1348-amino-acid chain; its full sequence is ABC multidrug transporter atrD (1348 aa).

Positions 1 to 10 (MSPLETNPLS) are enriched in polar residues. The tract at residues 1–67 (MSPLETNPLS…HRPKSSSSNN (67 aa)) is disordered. Positions 20–31 (ETSTTEEQASTP) are enriched in low complexity. Asn99 carries N-linked (GlcNAc...) asparagine glycosylation. Transmembrane regions (helical) follow at residues 114-134 (ILIM…LPLF), 168-188 (YFVY…VGFI), 240-260 (KVGL…IAYV), and 268-288 (ICSS…QFII). Residues 118–408 (VISTICAIAA…VSPNAQAFTN (291 aa)) enclose the ABC transmembrane type-1 1 domain. N-linked (GlcNAc...) asparagine glycosylation is present at Asn314. The next 2 membrane-spanning stretches (helical) occupy residues 344–364 (IVMG…YGLG) and 371–391 (FLVD…AILI). Positions 443-688 (IELRNVKHIY…GGAYRKLVEA (246 aa)) constitute an ABC transporter 1 domain. Residue 478-485 (GPSGSGKS) coordinates ATP. N-linked (GlcNAc...) asparagine glycosylation occurs at Asn550. The next 2 helical transmembrane spans lie at 778 to 798 (MLIG…QAVL) and 825 to 845 (LMFF…GAAF). The ABC transmembrane type-1 2 domain maps to 779 to 1068 (LIGLVFSVLA…VFSFAPDMGK (290 aa)). Asn877 carries N-linked (GlcNAc...) asparagine glycosylation. 4 consecutive transmembrane segments (helical) span residues 892 to 912 (HLSG…TTLG), 925 to 947 (LALV…FYML), 1015 to 1035 (ALVF…LGHH), and 1042 to 1062 (FFVC…VFSF). The N-linked (GlcNAc...) asparagine glycan is linked to Asn1088. Residues 1103-1341 (IEFRNVHFRY…KGRYYELVNL (239 aa)) form the ABC transporter 2 domain. 1138–1145 (GPSGCGKS) provides a ligand contact to ATP.

This sequence belongs to the ABC transporter superfamily. ABCB family. Multidrug resistance exporter (TC 3.A.1.201) subfamily.

The protein resides in the cell membrane. With respect to regulation, fenamirol efflux transporter activity is inhibited by the cyclosporin derivative PSC 833, nigericin, reserpine and valinomycin. The effect of reserpine is transiant, while that of the cyclosporin derivative PSC 833, nigericin and valinomycin is proportional to the time of exposure. Cyclohexinmide has inhibitory effect only when applied prior to addition of the fungicide. Its function is as follows. Pleiotropic ABC efflux transporter involved in the protection of the cells against a wide range of toxic compounds. Confers resistance to the azole fenarimol via efflux transport. May also be involved in the secretion of penicillin. In Emericella nidulans (Aspergillus nidulans), this protein is ABC multidrug transporter atrD.